We begin with the raw amino-acid sequence, 145 residues long: Large ribosomal subunit protein uL11 (145 aa).

The protein belongs to the universal ribosomal protein uL11 family. Part of the ribosomal stalk of the 50S ribosomal subunit. Interacts with L10 and the large rRNA to form the base of the stalk. L10 forms an elongated spine to which L12 dimers bind in a sequential fashion forming a multimeric L10(L12)X complex. Post-translationally, one or more lysine residues are methylated.

Functionally, forms part of the ribosomal stalk which helps the ribosome interact with GTP-bound translation factors. The polypeptide is Large ribosomal subunit protein uL11 (Aquifex aeolicus (strain VF5)).